Reading from the N-terminus, the 396-residue chain is Phosphoglycerate kinase (396 aa).

Substrate is bound by residues 21–23 (DLN), R36, 59–62 (HFGR), R118, and R151. Residues K201, E323, and 353–356 (GGDT) contribute to the ATP site.

It belongs to the phosphoglycerate kinase family. As to quaternary structure, monomer.

It is found in the cytoplasm. The catalysed reaction is (2R)-3-phosphoglycerate + ATP = (2R)-3-phospho-glyceroyl phosphate + ADP. It participates in carbohydrate degradation; glycolysis; pyruvate from D-glyceraldehyde 3-phosphate: step 2/5. The protein is Phosphoglycerate kinase of Brucella abortus biovar 1 (strain 9-941).